Here is a 475-residue protein sequence, read N- to C-terminus: Sulfate adenylyltransferase subunit 1 (475 aa).

Residues 25 to 239 form the tr-type G domain; the sequence is KSLLRFLTCG…EVLETVEIQR (215 aa). The tract at residues 34–41 is G1; it reads GSVDDGKS. A GTP-binding site is contributed by 34-41; it reads GSVDDGKS. The G2 stretch occupies residues 92-96; it reads GITID. The G3 stretch occupies residues 113–116; it reads DTPG. Residues 113–117 and 168–171 each bind GTP; these read DTPGH and NKMD. Residues 168–171 form a G4 region; the sequence is NKMD. A G5 region spans residues 206–208; the sequence is SAL.

The protein belongs to the TRAFAC class translation factor GTPase superfamily. Classic translation factor GTPase family. CysN/NodQ subfamily. In terms of assembly, heterodimer composed of CysD, the smaller subunit, and CysN.

The enzyme catalyses sulfate + ATP + H(+) = adenosine 5'-phosphosulfate + diphosphate. It functions in the pathway sulfur metabolism; hydrogen sulfide biosynthesis; sulfite from sulfate: step 1/3. Functionally, with CysD forms the ATP sulfurylase (ATPS) that catalyzes the adenylation of sulfate producing adenosine 5'-phosphosulfate (APS) and diphosphate, the first enzymatic step in sulfur assimilation pathway. APS synthesis involves the formation of a high-energy phosphoric-sulfuric acid anhydride bond driven by GTP hydrolysis by CysN coupled to ATP hydrolysis by CysD. In Escherichia coli (strain UTI89 / UPEC), this protein is Sulfate adenylyltransferase subunit 1.